Consider the following 306-residue polypeptide: 4-diphosphocytidyl-2-C-methyl-D-erythritol kinase (306 aa).

K23 is a catalytic residue. 108–118 (PIAAGIGGGSA) contacts ATP. Residue D150 is part of the active site.

It belongs to the GHMP kinase family. IspE subfamily.

It catalyses the reaction 4-CDP-2-C-methyl-D-erythritol + ATP = 4-CDP-2-C-methyl-D-erythritol 2-phosphate + ADP + H(+). The protein operates within isoprenoid biosynthesis; isopentenyl diphosphate biosynthesis via DXP pathway; isopentenyl diphosphate from 1-deoxy-D-xylulose 5-phosphate: step 3/6. Its function is as follows. Catalyzes the phosphorylation of the position 2 hydroxy group of 4-diphosphocytidyl-2C-methyl-D-erythritol. This Rhodopseudomonas palustris (strain BisB18) protein is 4-diphosphocytidyl-2-C-methyl-D-erythritol kinase.